The following is a 205-amino-acid chain: uncharacterized protein (205 aa).

An N-terminal signal peptide occupies residues 1 to 19; it reads MKTLCVLSIFLALLGGLCT. Over residues 40–133 the composition is skewed to low complexity; sequence VSSVASTSTP…PKTSKNNPKT (94 aa). Positions 40-135 are disordered; sequence VSSVASTSTP…TSKNNPKTQE (96 aa). Residues 147-167 form a helical membrane-spanning segment; it reads GILYLFILLLIIFVIILICFI.

The protein resides in the host membrane. This is an uncharacterized protein from Equine herpesvirus 2 (strain 86/87) (EHV-2).